Here is a 367-residue protein sequence, read N- to C-terminus: B2 bradykinin receptor (367 aa).

Residues 1 to 36 (MLNLTSQVPEPALNGTLPQSSSCFHSDWWNWLNTIQ) lie on the Extracellular side of the membrane. Residues Asn-3 and Asn-14 are each glycosylated (N-linked (GlcNAc...) asparagine). The helical transmembrane segment at 37-60 (APFLWVLFLLAALENIFVLSVFCL) threads the bilayer. The Cytoplasmic segment spans residues 61-69 (HKNSCTVAE). The chain crosses the membrane as a helical span at residues 70–94 (IYLGNLAMADLILALGLPFWAITIA). At 95 to 107 (NHFDWLFGEVLCR) the chain is on the extracellular side. Cys-106 and Cys-187 form a disulfide bridge. The helical transmembrane segment at 108–129 (VVNTMIYMNLYSSICFLMLVSI) threads the bilayer. Over 130-151 (DRYLALVKTMSMGRMRGVRWAK) the chain is Cytoplasmic. Tyr-132 is subject to Phosphotyrosine. Residues 152 to 174 (LYSLVIWGCTLLLSSPMLAFRTM) form a helical membrane-spanning segment. Topologically, residues 175–197 (HEYAAEGHNVTACIIKYPSRSWM) are extracellular. A glycan (N-linked (GlcNAc...) asparagine) is linked at Asn-183. The helical transmembrane segment at 198–224 (VFTNILLNSVGFLLPLSIITYCTVQIL) threads the bilayer. The Cytoplasmic portion of the chain corresponds to 225-243 (QVLRNNEMQKFKEIQTERK). The chain crosses the membrane as a helical span at residues 244–268 (ATVLVLAVLLLFVVCWLPFQISTFL). Over 269 to 287 (DTLLRLGVLSGCWDEHAVD) the chain is Extracellular. A helical transmembrane segment spans residues 288-311 (VITQISSYVAYSNSGLNPLVYVIV). Over 312 to 367 (GKRFRKKSREVYRVLCQKGGCMGEPVQMENSMGTLRTSISVERQIHKLQDWAGKKQ) the chain is Cytoplasmic. Residue Tyr-323 is modified to Phosphotyrosine. Cys-327 carries S-palmitoyl cysteine lipidation. Position 342 is a phosphoserine (Ser-342). Thr-345 is subject to Phosphothreonine. Phosphoserine; by GRK6 is present on residues Ser-349 and Ser-351.

The protein belongs to the G-protein coupled receptor 1 family. Bradykinin receptor subfamily. BDKRB2 sub-subfamily. As to quaternary structure, forms a complex with PECAM1 and GNAQ. Interacts with PECAM1.

It is found in the cell membrane. Functionally, receptor for bradykinin. It is associated with G proteins that activate a phosphatidylinositol-calcium second messenger system. This chain is B2 bradykinin receptor (BDKRB2), found in Sus scrofa (Pig).